We begin with the raw amino-acid sequence, 485 residues long: Adenosylhomocysteinase 1 (485 aa).

Positions 64, 139, and 205 each coordinate substrate. 206 to 208 (TTT) provides a ligand contact to NAD(+). Residues Lys235 and Asp239 each coordinate substrate. NAD(+)-binding positions include 271 to 276 (GDVGKG), Glu292, 348 to 350 (IGH), Asn397, His404, Lys479, 479 to 483 (KPPHY), and Tyr483.

Belongs to the adenosylhomocysteinase family. Homotetramer. NAD(+) serves as cofactor.

The catalysed reaction is S-adenosyl-L-homocysteine + H2O = L-homocysteine + adenosine. It participates in amino-acid biosynthesis; L-homocysteine biosynthesis; L-homocysteine from S-adenosyl-L-homocysteine: step 1/1. Its function is as follows. Essential protein during embryogenesis. Adenosylhomocysteine is a competitive inhibitor of S-adenosyl-L-methionine-dependent methyl transferase reactions; therefore adenosylhomocysteinase may play a key role in the control of methylations via regulation of the intracellular concentration of adenosylhomocysteine. Required for DNA methylation-dependent gene silencing. The protein is Adenosylhomocysteinase 1 of Arabidopsis thaliana (Mouse-ear cress).